The chain runs to 151 residues: UPF0178 protein Hhal_1913 (151 aa).

The protein belongs to the UPF0178 family.

The sequence is that of UPF0178 protein Hhal_1913 from Halorhodospira halophila (strain DSM 244 / SL1) (Ectothiorhodospira halophila (strain DSM 244 / SL1)).